A 156-amino-acid chain; its full sequence is Ribosomal RNA large subunit methyltransferase H (156 aa).

S-adenosyl-L-methionine contacts are provided by residues Leu73, Gly104, and 123–128 (LSSLTL).

This sequence belongs to the RNA methyltransferase RlmH family. Homodimer.

The protein localises to the cytoplasm. It carries out the reaction pseudouridine(1915) in 23S rRNA + S-adenosyl-L-methionine = N(3)-methylpseudouridine(1915) in 23S rRNA + S-adenosyl-L-homocysteine + H(+). Its function is as follows. Specifically methylates the pseudouridine at position 1915 (m3Psi1915) in 23S rRNA. This Bordetella bronchiseptica (strain ATCC BAA-588 / NCTC 13252 / RB50) (Alcaligenes bronchisepticus) protein is Ribosomal RNA large subunit methyltransferase H.